The primary structure comprises 161 residues: Regulator of ribonuclease activity A (161 aa).

It belongs to the RraA family. As to quaternary structure, homotrimer. Binds to both RNA-binding sites in the C-terminal region of Rne and to RhlB.

It localises to the cytoplasm. Functionally, globally modulates RNA abundance by binding to RNase E (Rne) and regulating its endonucleolytic activity. Can modulate Rne action in a substrate-dependent manner by altering the composition of the degradosome. Modulates RNA-binding and helicase activities of the degradosome. The sequence is that of Regulator of ribonuclease activity A from Tolumonas auensis (strain DSM 9187 / NBRC 110442 / TA 4).